We begin with the raw amino-acid sequence, 315 residues long: Cytosolic Fe-S cluster assembly factor nubp1-A (315 aa).

The tract at residues 1 to 23 (MADIPDNAPQHCPGTDSTEAGKS) is disordered. [4Fe-4S] cluster contacts are provided by Cys-12, Cys-26, Cys-29, and Cys-35. Position 66–73 (66–73 (GKGGVGKS)) interacts with ATP. [4Fe-4S] cluster is bound by residues Cys-239 and Cys-242.

It belongs to the Mrp/NBP35 ATP-binding proteins family. NUBP1/NBP35 subfamily. As to quaternary structure, heterotetramer of 2 nubp1 and 2 nubp2 chains. [4Fe-4S] cluster serves as cofactor.

It localises to the cytoplasm. Component of the cytosolic iron-sulfur (Fe/S) protein assembly (CIA) machinery. Required for maturation of extramitochondrial Fe-S proteins. The nubp1-nubp2 heterotetramer forms a Fe-S scaffold complex, mediating the de novo assembly of an Fe-S cluster and its transfer to target apoproteins. The chain is Cytosolic Fe-S cluster assembly factor nubp1-A (nubp1-A) from Xenopus laevis (African clawed frog).